Here is a 356-residue protein sequence, read N- to C-terminus: Glutamine synthetase nodule isozyme (356 aa).

The GS beta-grasp domain occupies 19–99 (IIAEYIWVGG…VICDVYTPAG (81 aa)). In terms of domain architecture, GS catalytic spans 106-356 (KRHNAAKIFS…IAETTLLWKP (251 aa)).

It belongs to the glutamine synthetase family. As to quaternary structure, homooctamer. As to expression, found at highest levels in root nodules.

It localises to the cytoplasm. The enzyme catalyses L-glutamate + NH4(+) + ATP = L-glutamine + ADP + phosphate + H(+). In Medicago sativa (Alfalfa), this protein is Glutamine synthetase nodule isozyme (GS1).